Here is a 291-residue protein sequence, read N- to C-terminus: Pentonolactonase XacC (291 aa).

A divalent metal cation contacts are provided by Glu15, Asn141, and Asp191. Asp191 serves as the catalytic Proton donor/acceptor.

Belongs to the SMP-30/CGR1 family. Monomer. A divalent metal cation serves as cofactor.

The catalysed reaction is L-arabinono-1,4-lactone + H2O = L-arabinonate + H(+). It carries out the reaction D-xylono-1,4-lactone + H2O = D-xylonate + H(+). It functions in the pathway carbohydrate degradation. In terms of biological role, pentonolactonase involved in D-arabinose and D-xylose catabolism. Catalyzes the hydrolysis of both L-arabino-gamma-lactone and D-xylono-gamma-lactone to the corresponding acids. Can also hydrolyze D-galactono-gamma-lactone and D-glucono-delta-lactone. This is Pentonolactonase XacC from Haloferax volcanii (strain ATCC 29605 / DSM 3757 / JCM 8879 / NBRC 14742 / NCIMB 2012 / VKM B-1768 / DS2) (Halobacterium volcanii).